We begin with the raw amino-acid sequence, 479 residues long: Anaerobic nitric oxide reductase flavorubredoxin (479 aa).

Residues 30–210 (LRGSSYNSYL…PFSRLVTPKI (181 aa)) are zinc metallo-hydrolase. The Fe cation site is built by histidine 79, glutamate 81, aspartate 83, histidine 147, aspartate 166, and histidine 227. The 140-residue stretch at 254-393 (ITIFYDTMSN…LCREHGREIA (140 aa)) folds into the Flavodoxin-like domain. FMN-binding positions include 260–264 (TMSNN) and 342–369 (AFGSHGWSGGAVDRLSTRLQDAGFEMSL). The region spanning 423–474 (GPRMQCSVCQWIYDPAKGEPMQDVAPGTPWSEVPDNFLCPECSLGKDVFDEL) is the Rubredoxin-like domain. Positions 428, 431, 461, and 464 each coordinate Fe cation.

It in the N-terminal section; belongs to the zinc metallo-hydrolase group 3 family. In terms of assembly, homotetramer. Fe cation is required as a cofactor. FMN serves as cofactor.

The protein resides in the cytoplasm. Its pathway is nitrogen metabolism; nitric oxide reduction. Its function is as follows. Anaerobic nitric oxide reductase; uses NADH to detoxify nitric oxide (NO), protecting several 4Fe-4S NO-sensitive enzymes. Has at least 2 reductase partners, only one of which (NorW, flavorubredoxin reductase) has been identified. NO probably binds to the di-iron center; electrons enter from the NorW at rubredoxin and are transferred sequentially to the FMN center and the di-iron center. Also able to function as an aerobic oxygen reductase. This chain is Anaerobic nitric oxide reductase flavorubredoxin, found in Escherichia coli O6:H1 (strain CFT073 / ATCC 700928 / UPEC).